The following is a 215-amino-acid chain: Large ribosomal subunit protein uL4 (215 aa).

The segment at 46 to 72 is disordered; sequence TAKSKNRAEVSGGGRKPWAQKGGGRAR. Residues 56–71 show a composition bias toward gly residues; it reads SGGGRKPWAQKGGGRA.

It belongs to the universal ribosomal protein uL4 family. Part of the 50S ribosomal subunit.

In terms of biological role, one of the primary rRNA binding proteins, this protein initially binds near the 5'-end of the 23S rRNA. It is important during the early stages of 50S assembly. It makes multiple contacts with different domains of the 23S rRNA in the assembled 50S subunit and ribosome. Functionally, forms part of the polypeptide exit tunnel. The polypeptide is Large ribosomal subunit protein uL4 (Helicobacter pylori (strain Shi470)).